A 264-amino-acid polypeptide reads, in one-letter code: Ribosomal protein L11 methyltransferase (264 aa).

The S-adenosyl-L-methionine site is built by T116, G137, D159, and N200.

It belongs to the methyltransferase superfamily. PrmA family.

It localises to the cytoplasm. It catalyses the reaction L-lysyl-[protein] + 3 S-adenosyl-L-methionine = N(6),N(6),N(6)-trimethyl-L-lysyl-[protein] + 3 S-adenosyl-L-homocysteine + 3 H(+). Its function is as follows. Methylates ribosomal protein L11. The protein is Ribosomal protein L11 methyltransferase of Thermotoga neapolitana.